The following is a 231-amino-acid chain: 2-C-methyl-D-erythritol 4-phosphate cytidylyltransferase (231 aa).

It belongs to the IspD/TarI cytidylyltransferase family. IspD subfamily.

It carries out the reaction 2-C-methyl-D-erythritol 4-phosphate + CTP + H(+) = 4-CDP-2-C-methyl-D-erythritol + diphosphate. It functions in the pathway isoprenoid biosynthesis; isopentenyl diphosphate biosynthesis via DXP pathway; isopentenyl diphosphate from 1-deoxy-D-xylulose 5-phosphate: step 2/6. Its function is as follows. Catalyzes the formation of 4-diphosphocytidyl-2-C-methyl-D-erythritol from CTP and 2-C-methyl-D-erythritol 4-phosphate (MEP). The chain is 2-C-methyl-D-erythritol 4-phosphate cytidylyltransferase from Clostridium novyi (strain NT).